The sequence spans 348 residues: NADH-ubiquinone oxidoreductase chain 2 (348 aa).

The next 10 membrane-spanning stretches (helical) occupy residues 3–23, 25–45, 59–79, 93–115, 149–169, 178–198, 201–221, 239–259, 276–296, and 326–346; these read PIII…VLMS, HWFM…PVLM, YFLT…INLI, TAST…HFWV, LNMT…GWGG, ILAF…MFNP, TLLN…ILIF, IMTV…PLSG, IALA…YMRL, and LPTL…MMML.

The protein belongs to the complex I subunit 2 family. Core subunit of respiratory chain NADH dehydrogenase (Complex I) which is composed of 45 different subunits. Interacts with TMEM242.

The protein resides in the mitochondrion inner membrane. It catalyses the reaction a ubiquinone + NADH + 5 H(+)(in) = a ubiquinol + NAD(+) + 4 H(+)(out). In terms of biological role, core subunit of the mitochondrial membrane respiratory chain NADH dehydrogenase (Complex I) which catalyzes electron transfer from NADH through the respiratory chain, using ubiquinone as an electron acceptor. Essential for the catalytic activity and assembly of complex I. This is NADH-ubiquinone oxidoreductase chain 2 from Thyroptera tricolor (Spix's disk-winged bat).